We begin with the raw amino-acid sequence, 144 residues long: UPF0102 protein BURPS1106A_3900 (144 aa).

Positions 1–28 (MCHAREASPGTGEPEAAPRDNFPRAAGS) are disordered.

This sequence belongs to the UPF0102 family.

The polypeptide is UPF0102 protein BURPS1106A_3900 (Burkholderia pseudomallei (strain 1106a)).